We begin with the raw amino-acid sequence, 224 residues long: Phosphoribosylformylglycinamidine synthase subunit PurQ (224 aa).

The 223-residue stretch at 2 to 224 folds into the Glutamine amidotransferase type-1 domain; sequence KFAVIVFPGS…IVDNFVKGGV (223 aa). C86 acts as the Nucleophile in catalysis. Residues H194 and E196 contribute to the active site.

Part of the FGAM synthase complex composed of 1 PurL, 1 PurQ and 2 PurS subunits.

It localises to the cytoplasm. The catalysed reaction is N(2)-formyl-N(1)-(5-phospho-beta-D-ribosyl)glycinamide + L-glutamine + ATP + H2O = 2-formamido-N(1)-(5-O-phospho-beta-D-ribosyl)acetamidine + L-glutamate + ADP + phosphate + H(+). It catalyses the reaction L-glutamine + H2O = L-glutamate + NH4(+). It participates in purine metabolism; IMP biosynthesis via de novo pathway; 5-amino-1-(5-phospho-D-ribosyl)imidazole from N(2)-formyl-N(1)-(5-phospho-D-ribosyl)glycinamide: step 1/2. Part of the phosphoribosylformylglycinamidine synthase complex involved in the purines biosynthetic pathway. Catalyzes the ATP-dependent conversion of formylglycinamide ribonucleotide (FGAR) and glutamine to yield formylglycinamidine ribonucleotide (FGAM) and glutamate. The FGAM synthase complex is composed of three subunits. PurQ produces an ammonia molecule by converting glutamine to glutamate. PurL transfers the ammonia molecule to FGAR to form FGAM in an ATP-dependent manner. PurS interacts with PurQ and PurL and is thought to assist in the transfer of the ammonia molecule from PurQ to PurL. The sequence is that of Phosphoribosylformylglycinamidine synthase subunit PurQ from Caldanaerobacter subterraneus subsp. tengcongensis (strain DSM 15242 / JCM 11007 / NBRC 100824 / MB4) (Thermoanaerobacter tengcongensis).